We begin with the raw amino-acid sequence, 74 residues long: Anaphase-promoting complex subunit 13 (74 aa).

Positions Leu-33–Gln-53 are disordered.

The protein belongs to the APC13 family. In terms of assembly, the mammalian APC/C is composed at least of 14 distinct subunits ANAPC1, ANAPC2, CDC27/APC3, ANAPC4, ANAPC5, CDC16/APC6, ANAPC7, CDC23/APC8, ANAPC10, ANAPC11, CDC26/APC12, ANAPC13, ANAPC15 and ANAPC16 that assemble into a complex of at least 19 chains with a combined molecular mass of around 1.2 MDa; APC/C interacts with FZR1 and FBXO5.

It localises to the nucleus. Its pathway is protein modification; protein ubiquitination. Functionally, component of the anaphase promoting complex/cyclosome (APC/C), a cell cycle-regulated E3 ubiquitin ligase that controls progression through mitosis and the G1 phase of the cell cycle. The APC/C complex acts by mediating ubiquitination and subsequent degradation of target proteins: it mainly mediates the formation of 'Lys-11'-linked polyubiquitin chains and, to a lower extent, the formation of 'Lys-48'- and 'Lys-63'-linked polyubiquitin chains. The APC/C complex catalyzes assembly of branched 'Lys-11'-/'Lys-48'-linked branched ubiquitin chains on target proteins. The polypeptide is Anaphase-promoting complex subunit 13 (ANAPC13) (Pongo abelii (Sumatran orangutan)).